The sequence spans 361 residues: D-alanine--D-alanine ligase (361 aa).

An ATP-grasp domain is found at 144-350 (KLAAADAGLA…FMELTDRLIR (207 aa)). An ATP-binding site is contributed by 177 to 232 (VASLSFPMFVKPVSLGSSVGITKVNSESELAEAITHACSLDSKVLIEQAVKGREVE). Mg(2+) is bound by residues aspartate 303, glutamate 317, and asparagine 319.

It belongs to the D-alanine--D-alanine ligase family. It depends on Mg(2+) as a cofactor. Requires Mn(2+) as cofactor.

It is found in the cytoplasm. The catalysed reaction is 2 D-alanine + ATP = D-alanyl-D-alanine + ADP + phosphate + H(+). It participates in cell wall biogenesis; peptidoglycan biosynthesis. Cell wall formation. This Chlorobium luteolum (strain DSM 273 / BCRC 81028 / 2530) (Pelodictyon luteolum) protein is D-alanine--D-alanine ligase.